The sequence spans 274 residues: Aspartate/glutamate leucyltransferase (274 aa).

It belongs to the R-transferase family. Bpt subfamily.

Its subcellular location is the cytoplasm. The enzyme catalyses N-terminal L-glutamyl-[protein] + L-leucyl-tRNA(Leu) = N-terminal L-leucyl-L-glutamyl-[protein] + tRNA(Leu) + H(+). It catalyses the reaction N-terminal L-aspartyl-[protein] + L-leucyl-tRNA(Leu) = N-terminal L-leucyl-L-aspartyl-[protein] + tRNA(Leu) + H(+). Functionally, functions in the N-end rule pathway of protein degradation where it conjugates Leu from its aminoacyl-tRNA to the N-termini of proteins containing an N-terminal aspartate or glutamate. This is Aspartate/glutamate leucyltransferase from Ruegeria sp. (strain TM1040) (Silicibacter sp.).